A 132-amino-acid chain; its full sequence is ATP synthase epsilon chain, chloroplastic (132 aa).

Belongs to the ATPase epsilon chain family. F-type ATPases have 2 components, CF(1) - the catalytic core - and CF(0) - the membrane proton channel. CF(1) has five subunits: alpha(3), beta(3), gamma(1), delta(1), epsilon(1). CF(0) has three main subunits: a, b and c.

Its subcellular location is the plastid. It localises to the chloroplast thylakoid membrane. Functionally, produces ATP from ADP in the presence of a proton gradient across the membrane. The sequence is that of ATP synthase epsilon chain, chloroplastic from Adiantum capillus-veneris (Maidenhair fern).